We begin with the raw amino-acid sequence, 149 residues long: Large ribosomal subunit protein bL9 (149 aa).

Belongs to the bacterial ribosomal protein bL9 family.

Functionally, binds to the 23S rRNA. This is Large ribosomal subunit protein bL9 from Syntrophus aciditrophicus (strain SB).